A 200-amino-acid polypeptide reads, in one-letter code: Oligoribonuclease (200 aa).

The Exonuclease domain occupies 5–169 (MVWIDCEMTG…ADIRESIAEL (165 aa)). Residue tyrosine 126 is part of the active site.

It belongs to the oligoribonuclease family.

It is found in the cytoplasm. Its function is as follows. 3'-to-5' exoribonuclease specific for small oligoribonucleotides. The protein is Oligoribonuclease of Streptomyces avermitilis (strain ATCC 31267 / DSM 46492 / JCM 5070 / NBRC 14893 / NCIMB 12804 / NRRL 8165 / MA-4680).